The primary structure comprises 143 residues: Peptide methionine sulfoxide reductase B9 (143 aa).

The region spanning 19–140 is the MsrB domain; sequence DQDWRAILSP…NSVSLKFSEI (122 aa). Zn(2+)-binding residues include C58, C61, C104, and C107. A disulfide bond links C76 and C129. C129 acts as the Nucleophile in catalysis.

This sequence belongs to the MsrB Met sulfoxide reductase family. Requires Zn(2+) as cofactor.

The protein localises to the cytoplasm. It is found in the cytosol. The catalysed reaction is L-methionyl-[protein] + [thioredoxin]-disulfide + H2O = L-methionyl-(R)-S-oxide-[protein] + [thioredoxin]-dithiol. In terms of biological role, catalyzes the reduction of methionine sulfoxide (MetSO) to methionine in proteins. Plays a protective role against oxidative stress by restoring activity to proteins that have been inactivated by methionine oxidation. MSRB family specifically reduces the MetSO R-enantiomer. This chain is Peptide methionine sulfoxide reductase B9 (MSRB9), found in Arabidopsis thaliana (Mouse-ear cress).